The primary structure comprises 549 residues: Glucose-6-phosphate isomerase (549 aa).

Residue Glu-355 is the Proton donor of the active site. Active-site residues include His-386 and Lys-514.

The protein belongs to the GPI family.

The protein localises to the cytoplasm. It catalyses the reaction alpha-D-glucose 6-phosphate = beta-D-fructose 6-phosphate. Its pathway is carbohydrate biosynthesis; gluconeogenesis. The protein operates within carbohydrate degradation; glycolysis; D-glyceraldehyde 3-phosphate and glycerone phosphate from D-glucose: step 2/4. Catalyzes the reversible isomerization of glucose-6-phosphate to fructose-6-phosphate. This is Glucose-6-phosphate isomerase from Salmonella gallinarum (strain 287/91 / NCTC 13346).